Reading from the N-terminus, the 436-residue chain is Xylose isomerase (436 aa).

Catalysis depends on residues His-100 and Asp-103. Mg(2+) is bound by residues Glu-231, Glu-267, His-270, Asp-295, Asp-306, Asp-308, and Asp-338.

The protein belongs to the xylose isomerase family. As to quaternary structure, homotetramer. Mg(2+) is required as a cofactor.

Its subcellular location is the cytoplasm. The catalysed reaction is alpha-D-xylose = alpha-D-xylulofuranose. The protein is Xylose isomerase of Rhizobium johnstonii (strain DSM 114642 / LMG 32736 / 3841) (Rhizobium leguminosarum bv. viciae).